Reading from the N-terminus, the 247-residue chain is 1-(5-phosphoribosyl)-5-[(5-phosphoribosylamino)methylideneamino] imidazole-4-carboxamide isomerase (247 aa).

The Proton acceptor role is filled by aspartate 16. The active-site Proton donor is the aspartate 135.

It belongs to the HisA/HisF family.

It is found in the cytoplasm. It carries out the reaction 1-(5-phospho-beta-D-ribosyl)-5-[(5-phospho-beta-D-ribosylamino)methylideneamino]imidazole-4-carboxamide = 5-[(5-phospho-1-deoxy-D-ribulos-1-ylimino)methylamino]-1-(5-phospho-beta-D-ribosyl)imidazole-4-carboxamide. It functions in the pathway amino-acid biosynthesis; L-histidine biosynthesis; L-histidine from 5-phospho-alpha-D-ribose 1-diphosphate: step 4/9. This is 1-(5-phosphoribosyl)-5-[(5-phosphoribosylamino)methylideneamino] imidazole-4-carboxamide isomerase from Paenarthrobacter aurescens (strain TC1).